A 132-amino-acid polypeptide reads, in one-letter code: Small ribosomal subunit protein uS19 (132 aa).

This sequence belongs to the universal ribosomal protein uS19 family. As to quaternary structure, part of the 30S ribosomal subunit.

Its function is as follows. Protein S19 forms a complex with S13 that binds strongly to the 16S ribosomal RNA. This is Small ribosomal subunit protein uS19 from Pyrococcus furiosus (strain ATCC 43587 / DSM 3638 / JCM 8422 / Vc1).